A 564-amino-acid polypeptide reads, in one-letter code: Bicarbonate transporter BicA (564 aa).

The Cytoplasmic portion of the chain corresponds to 1–11 (MQITNKIHFRN). Residues 12 to 37 (LQGDLFGGVTAAVIALPMALAFGIAS) traverse the membrane as a helical segment. The Periplasmic portion of the chain corresponds to 38-40 (GAG). A helical transmembrane segment spans residues 41–58 (ATAGLWGAVIVGFFAALF). Residues 59 to 70 (GGTPTLISEPTG) lie on the Cytoplasmic side of the membrane. Residue threonine 69 participates in hydrogencarbonate binding. Residues 71-86 (PMTVVQTAVIASLVAA) form a helical membrane-spanning segment. Residues 87–90 (DPDN) are Periplasmic-facing. The chain crosses the membrane as a helical span at residues 91 to 112 (GLAMAFTVVMMAGLFQIAFGLL). Topologically, residues 113 to 122 (KLGKYVTMMP) are cytoplasmic. Residues 123-145 (YTVISGFMSGIGIILVILQLAPF) form a helical membrane-spanning segment. Over 146–170 (LGQASPKGGVIGTLQALPNLVSNVR) the chain is Periplasmic. A helical membrane pass occupies residues 171 to 185 (PVETLLALMTVGIIW). The Cytoplasmic portion of the chain corresponds to 186–196 (FMPSRWKKFAP). A helical transmembrane segment spans residues 197–211 (PQLVALVLGTIISIT). The Periplasmic portion of the chain corresponds to 212–240 (LFGDLDIRRIGEIQAGLPALQLPVFQADQ). The chain crosses the membrane as a helical span at residues 241–269 (LQRMLIDAAVLGMLGCIDALLTSVVADSL). Aspartate 258 and threonine 262 together coordinate Na(+). Over 270–275 (TRTEHN) the chain is Cytoplasmic. A helical membrane pass occupies residues 276-292 (SNKELVGQGIGNVMSGL). The Periplasmic segment spans residues 293 to 302 (FGGLGGAGAT). Glycine 300 provides a ligand contact to Na(+). Alanine 301 contributes to the hydrogencarbonate binding site. Threonine 302 is a binding site for Na(+). A helical membrane pass occupies residues 303–312 (MGTVVNIQSG). Topologically, residues 313–315 (GRT) are cytoplasmic. A helical transmembrane segment spans residues 316–338 (ALSGLIRAMVLLVVILGAAKLAA). The Periplasmic portion of the chain corresponds to 339–341 (TIP). The helical transmembrane segment at 342–357 (LAVLAGIAFKVGVDII) threads the bilayer. Residues 358–369 (DWGFLKRAHHVS) lie on the Cytoplasmic side of the membrane. The chain crosses the membrane as a helical span at residues 370–390 (IKGALIMYAVIVLTVLVDLIA). The Periplasmic segment spans residues 391 to 392 (AV). The chain crosses the membrane as a helical span at residues 393 to 405 (GIGVFIANILTID). Residues 406–564 (RMSALQSKAV…PSSSSVQTTY (159 aa)) are Cytoplasmic-facing. The 111-residue stretch at 432 to 542 (KRWLDEGNGR…DDRSEALKDA (111 aa)) folds into the STAS domain.

The protein belongs to the SLC26A/SulP transporter (TC 2.A.53) family. In terms of assembly, forms homodimers through the STAS cytoplasmic domain.

It is found in the cell inner membrane. In terms of biological role, low affinity, high-flux Na(+)-dependent bicarbonate transporter. Involved in carbone dioxide-concentrating mechanisms (CCMs) that accumulate CO(2) and improve photosynthetic carbon fixation. This chain is Bicarbonate transporter BicA, found in Synechocystis sp. (strain ATCC 27184 / PCC 6803 / Kazusa).